Reading from the N-terminus, the 441-residue chain is Probable cytosolic Fe-S cluster assembly factor v1g210509 (441 aa).

Residues cysteine 24, cysteine 72, cysteine 75, cysteine 78, cysteine 196, cysteine 252, and cysteine 401 each coordinate [4Fe-4S] cluster.

It belongs to the NARF family.

Its function is as follows. Component of the cytosolic iron-sulfur (Fe/S) protein assembly machinery. Required for maturation of extramitochondrial Fe/S proteins. The protein is Probable cytosolic Fe-S cluster assembly factor v1g210509 of Nematostella vectensis (Starlet sea anemone).